Reading from the N-terminus, the 147-residue chain is Transcription antitermination protein NusB (147 aa).

The protein belongs to the NusB family.

In terms of biological role, involved in transcription antitermination. Required for transcription of ribosomal RNA (rRNA) genes. Binds specifically to the boxA antiterminator sequence of the ribosomal RNA (rrn) operons. The protein is Transcription antitermination protein NusB of Legionella pneumophila (strain Paris).